Here is a 460-residue protein sequence, read N- to C-terminus: Trigger factor (460 aa).

The PPIase FKBP-type domain occupies 166–245 (DDFLTIDITA…VKAVKERELP (80 aa)). Residues 434–460 (AAEEAAAGEANEEADVVASDDPAAVKF) are disordered. Residues 449–460 (VVASDDPAAVKF) are compositionally biased toward low complexity.

It belongs to the FKBP-type PPIase family. Tig subfamily.

The protein localises to the cytoplasm. It carries out the reaction [protein]-peptidylproline (omega=180) = [protein]-peptidylproline (omega=0). Involved in protein export. Acts as a chaperone by maintaining the newly synthesized protein in an open conformation. Functions as a peptidyl-prolyl cis-trans isomerase. The chain is Trigger factor from Paenarthrobacter aurescens (strain TC1).